The following is a 119-amino-acid chain: Single-stranded DNA-binding protein (119 aa).

Residues 3–102 enclose the SSB domain; sequence INIVTLVGRV…IRVDQLELLG (100 aa).

In terms of assembly, homotetramer.

This chain is Single-stranded DNA-binding protein (ssb1), found in Anabaena variabilis.